The following is a 95-amino-acid chain: Small ribosomal subunit protein uS15 (95 aa).

It belongs to the universal ribosomal protein uS15 family. As to quaternary structure, part of the 30S ribosomal subunit. Forms a bridge to the 50S subunit in the 70S ribosome, contacting the 23S rRNA.

One of the primary rRNA binding proteins, it binds directly to 16S rRNA where it helps nucleate assembly of the platform of the 30S subunit by binding and bridging several RNA helices of the 16S rRNA. Its function is as follows. Forms an intersubunit bridge (bridge B4) with the 23S rRNA of the 50S subunit in the ribosome. The chain is Small ribosomal subunit protein uS15 from Streptomyces coelicolor (strain ATCC BAA-471 / A3(2) / M145).